A 91-amino-acid polypeptide reads, in one-letter code: Movement protein TGBp3 (91 aa).

The Lumenal segment spans residues M1–S23. The helical transmembrane segment at A24–T46 threads the bilayer. Residues T47 to K91 lie on the Cytoplasmic side of the membrane.

Belongs to the Tymovirales TGBp3 protein family.

The protein resides in the host endoplasmic reticulum membrane. Plays a role in viral cell-to-cell propagation, by facilitating genome transport to neighboring plant cells through plasmosdesmata. May induce the formation of granular vesicles derived from the Endoplasmic reticulum, which align on actin filaments. The polypeptide is Movement protein TGBp3 (Cymbidium mosaic virus (strain Singapore)).